A 474-amino-acid polypeptide reads, in one-letter code: ATP synthase subunit beta 1 (474 aa).

ATP is bound at residue 157-164; that stretch reads GGAGVGKT.

Belongs to the ATPase alpha/beta chains family. F-type ATPases have 2 components, CF(1) - the catalytic core - and CF(0) - the membrane proton channel. CF(1) has five subunits: alpha(3), beta(3), gamma(1), delta(1), epsilon(1). CF(0) has three main subunits: a(1), b(2) and c(9-12). The alpha and beta chains form an alternating ring which encloses part of the gamma chain. CF(1) is attached to CF(0) by a central stalk formed by the gamma and epsilon chains, while a peripheral stalk is formed by the delta and b chains.

The protein localises to the cell inner membrane. It catalyses the reaction ATP + H2O + 4 H(+)(in) = ADP + phosphate + 5 H(+)(out). Functionally, produces ATP from ADP in the presence of a proton gradient across the membrane. The catalytic sites are hosted primarily by the beta subunits. This Polaromonas naphthalenivorans (strain CJ2) protein is ATP synthase subunit beta 1.